Consider the following 408-residue polypeptide: Histidine--tRNA ligase (408 aa).

The protein belongs to the class-II aminoacyl-tRNA synthetase family. As to quaternary structure, homodimer.

It is found in the cytoplasm. It catalyses the reaction tRNA(His) + L-histidine + ATP = L-histidyl-tRNA(His) + AMP + diphosphate + H(+). This chain is Histidine--tRNA ligase, found in Campylobacter jejuni subsp. doylei (strain ATCC BAA-1458 / RM4099 / 269.97).